The primary structure comprises 1574 residues: Disco-interacting protein 2 homolog B (1574 aa).

A phosphoserine mark is found at Ser9, Ser50, and Ser53. The DMAP1-binding domain maps to 12-130; sequence AVAALPPEVR…PMPTKRRSTF (119 aa). The interval 31–166 is disordered; it reads LSEGDITQKG…AALSAALQQS (136 aa). Polar residues predominate over residues 52 to 62; the sequence is YSPQTQETDSI. A compositionally biased stretch (low complexity) spans 69-82; the sequence is QTPAPTAAQTSAPS. Position 70 is a phosphothreonine (Thr70). Positions 91 to 103 are enriched in basic and acidic residues; it reads GARDERYRSDIHT. Ser99 carries the phosphoserine modification. At Thr139 the chain carries Phosphothreonine. Phosphoserine is present on residues Ser145, Ser147, and Ser152. Residues 154–166 are compositionally biased toward low complexity; it reads RRQAALSAALQQS. Phosphoserine is present on residues Ser177, Ser192, and Ser202. The tract at residues 178-200 is disordered; the sequence is IQGSSTSSSASSTLSHGEVKGTS. Low complexity predominate over residues 181-192; the sequence is SSTSSSASSTLS. A disordered region spans residues 217–244; it reads APPDVTATTSSSSSSLRPANIDLPPSGI. Ser256 is modified (phosphoserine).

It belongs to the DIP2 family. Interacts with alpha-tubulin. In terms of tissue distribution, highly expressed in brain and spinal cord (at protein level). In brain, expression is detected in the main olfactory bulb, cortex, lateral ventricle, cornu ammonis 1, cornu ammonis 3, dentate gyrus, striatum, cerebellar cortex and medial habenula. Expressed primarily in neurons including excitatory pyramidal neurons and inhibitory interneurons.

Its subcellular location is the cell projection. The protein resides in the dendrite. The protein localises to the axon. It is found in the perikaryon. Its function is as follows. Negatively regulates axonal outgrowth and is essential for normal synaptic transmission. Not required for regulation of axon polarity. Promotes acetylation of alpha-tubulin. The protein is Disco-interacting protein 2 homolog B (Dip2b) of Mus musculus (Mouse).